A 302-amino-acid polypeptide reads, in one-letter code: Putative T-box protein 34 (302 aa).

Residues 5-180 (IVNEHKYREL…KMNLAPGSSQ (176 aa)) constitute a DNA-binding region (T-box).

It localises to the nucleus. The sequence is that of Putative T-box protein 34 (tbx-34) from Caenorhabditis elegans.